A 397-amino-acid polypeptide reads, in one-letter code: Enoyl-[acyl-carrier-protein] reductase [NADH] (397 aa).

NAD(+)-binding positions include 48–53 (GASTGY), 74–75 (FE), 111–112 (DA), and 139–140 (VA). Tyr-225 is a binding site for substrate. Tyr-235 functions as the Proton donor in the catalytic mechanism. Residues Lys-244 and 273 to 275 (VVT) contribute to the NAD(+) site.

This sequence belongs to the TER reductase family. In terms of assembly, monomer.

The enzyme catalyses a 2,3-saturated acyl-[ACP] + NAD(+) = a (2E)-enoyl-[ACP] + NADH + H(+). It participates in lipid metabolism; fatty acid biosynthesis. Functionally, involved in the final reduction of the elongation cycle of fatty acid synthesis (FAS II). Catalyzes the reduction of a carbon-carbon double bond in an enoyl moiety that is covalently linked to an acyl carrier protein (ACP). The chain is Enoyl-[acyl-carrier-protein] reductase [NADH] from Burkholderia pseudomallei (strain K96243).